The following is a 212-amino-acid chain: Probable GTP-binding protein EngB (212 aa).

An EngB-type G domain is found at 27–201; the sequence is GGIEIAFAGR…TRILSDWYQP (175 aa). GTP is bound by residues 35–42, 62–66, 80–83, 147–150, and 180–182; these read GRSNAGKS, GRTQL, DLPG, TKAD, and FSS. Residues serine 42 and threonine 64 each coordinate Mg(2+).

The protein belongs to the TRAFAC class TrmE-Era-EngA-EngB-Septin-like GTPase superfamily. EngB GTPase family. Mg(2+) serves as cofactor.

Its function is as follows. Necessary for normal cell division and for the maintenance of normal septation. The chain is Probable GTP-binding protein EngB from Tolumonas auensis (strain DSM 9187 / NBRC 110442 / TA 4).